Reading from the N-terminus, the 430-residue chain is Tol-Pal system protein TolB (430 aa).

Positions 1 to 21 are cleaved as a signal peptide; sequence MKQALRVAFGFLILWASVLHA.

It belongs to the TolB family. The Tol-Pal system is composed of five core proteins: the inner membrane proteins TolA, TolQ and TolR, the periplasmic protein TolB and the outer membrane protein Pal. They form a network linking the inner and outer membranes and the peptidoglycan layer.

It localises to the periplasm. Part of the Tol-Pal system, which plays a role in outer membrane invagination during cell division and is important for maintaining outer membrane integrity. TolB occupies a key intermediary position in the Tol-Pal system because it communicates directly with both membrane-embedded components, Pal in the outer membrane and TolA in the inner membrane. The polypeptide is Tol-Pal system protein TolB (Shigella flexneri).